We begin with the raw amino-acid sequence, 473 residues long: ATP synthase subunit beta (473 aa).

An ATP-binding site is contributed by 153-160 (GGAGVGKT).

It belongs to the ATPase alpha/beta chains family. As to quaternary structure, F-type ATPases have 2 components, CF(1) - the catalytic core - and CF(0) - the membrane proton channel. CF(1) has five subunits: alpha(3), beta(3), gamma(1), delta(1), epsilon(1). CF(0) has three main subunits: a(1), b(2) and c(9-12). The alpha and beta chains form an alternating ring which encloses part of the gamma chain. CF(1) is attached to CF(0) by a central stalk formed by the gamma and epsilon chains, while a peripheral stalk is formed by the delta and b chains.

The protein localises to the cell inner membrane. It catalyses the reaction ATP + H2O + 4 H(+)(in) = ADP + phosphate + 5 H(+)(out). In terms of biological role, produces ATP from ADP in the presence of a proton gradient across the membrane. The catalytic sites are hosted primarily by the beta subunits. In Rickettsia canadensis (strain McKiel), this protein is ATP synthase subunit beta.